We begin with the raw amino-acid sequence, 209 residues long: Uracil phosphoribosyltransferase (209 aa).

Residues Arg79, Arg104, and 131–139 (DPMLATGGT) each bind 5-phospho-alpha-D-ribose 1-diphosphate. Uracil-binding positions include Ile194 and 199-201 (GDA). Residue Asp200 participates in 5-phospho-alpha-D-ribose 1-diphosphate binding.

This sequence belongs to the UPRTase family. It depends on Mg(2+) as a cofactor.

The catalysed reaction is UMP + diphosphate = 5-phospho-alpha-D-ribose 1-diphosphate + uracil. Its pathway is pyrimidine metabolism; UMP biosynthesis via salvage pathway; UMP from uracil: step 1/1. With respect to regulation, allosterically activated by GTP. Its function is as follows. Catalyzes the conversion of uracil and 5-phospho-alpha-D-ribose 1-diphosphate (PRPP) to UMP and diphosphate. The sequence is that of Uracil phosphoribosyltransferase from Pseudoalteromonas atlantica (strain T6c / ATCC BAA-1087).